A 151-amino-acid polypeptide reads, in one-letter code: Allatostatin-A (151 aa).

An N-terminal signal peptide occupies residues 1–21 (MNSLHAHLLLLAVCCVGYIAS). A propeptide spanning residues 22 to 54 (SPVIGQDQRSGDSDADVLLAADEMADNGGDNID) is cleaved from the precursor. Leucine 64, leucine 88, and leucine 99 each carry leucine amide. Residues 103-135 (SDYDYDQDNEIDYRVPPANYLAAERAVRPGRQN) constitute a propeptide that is removed on maturation. A disordered region spans residues 131 to 151 (PGRQNKRTTRPQPFNFGLGRR). Leucine amide is present on leucine 148.

The protein belongs to the allatostatin family.

Its subcellular location is the secreted. Its function is as follows. May act as a neurotransmitter or neuromodulator. In Drosophila melanogaster (Fruit fly), this protein is Allatostatin-A (AstA).